Here is a 467-residue protein sequence, read N- to C-terminus: Glutamate--tRNA ligase (467 aa).

Residues 13 to 23 (PSPTGFLHLGG) carry the 'HIGH' region motif. Positions 118–133 (ARGDKPRYDGTWRPEP) are enriched in basic and acidic residues. The disordered stretch occupies residues 118–141 (ARGDKPRYDGTWRPEPGKTLPAIP). The 'KMSKS' region motif lies at 245-249 (KLSKR). An ATP-binding site is contributed by Lys-248.

The protein belongs to the class-I aminoacyl-tRNA synthetase family. Glutamate--tRNA ligase type 1 subfamily. As to quaternary structure, monomer.

It localises to the cytoplasm. The catalysed reaction is tRNA(Glu) + L-glutamate + ATP = L-glutamyl-tRNA(Glu) + AMP + diphosphate. In terms of biological role, catalyzes the attachment of glutamate to tRNA(Glu) in a two-step reaction: glutamate is first activated by ATP to form Glu-AMP and then transferred to the acceptor end of tRNA(Glu). The protein is Glutamate--tRNA ligase of Bordetella avium (strain 197N).